We begin with the raw amino-acid sequence, 164 residues long: Monothiol glutaredoxin-S10 (164 aa).

Residues glutamate 60 to valine 161 form the Glutaredoxin domain. Cysteine 80 lines the [2Fe-2S] cluster pocket.

This sequence belongs to the glutaredoxin family. CPYC subfamily.

It is found in the cytoplasm. Functionally, may only reduce GSH-thiol disulfides, but not protein disulfides. This is Monothiol glutaredoxin-S10 (GRXS10) from Oryza sativa subsp. japonica (Rice).